Here is a 166-residue protein sequence, read N- to C-terminus: Mitochondrial fission process protein 1 (166 aa).

The next 2 membrane-spanning stretches (helical) occupy residues 34–54 and 80–100; these read SLVPAAVVWLSYGVASSYVLA and AVVDTFVWQALASVAIPGFTI. Position 123 is an N6-succinyllysine (Lys123). A helical membrane pass occupies residues 129-149; the sequence is LGLLTIPIIIHPIDRSVDFLL.

It belongs to the MTFP1 family.

It localises to the mitochondrion inner membrane. Involved in the mitochondrial division probably by regulating membrane fission. Loss-of-function induces the release of cytochrome c, which activates the caspase cascade and leads to apoptosis. The sequence is that of Mitochondrial fission process protein 1 (MTFP1) from Homo sapiens (Human).